Reading from the N-terminus, the 221-residue chain is Placenta growth factor (221 aa).

The N-terminal stretch at 1–18 (MPVMRLFPCFLQLLAGLA) is a signal peptide. Asn-33 carries an N-linked (GlcNAc...) asparagine glycan. 3 cysteine pairs are disulfide-bonded: Cys-52–Cys-94, Cys-83–Cys-128, and Cys-87–Cys-130. A glycan (N-linked (GlcNAc...) asparagine) is linked at Asn-101. The tract at residues 175 to 221 (QSAVWPSSPVPEEIPRMHPGRNGKKQQRKPLREKMKPERCGDAVPRR) is disordered. A compositionally biased stretch (basic residues) spans 192 to 203 (HPGRNGKKQQRK). Residues 193 to 213 (PGRNGKKQQRKPLREKMKPER) form a heparin-binding region. The segment covering 204–221 (PLREKMKPERCGDAVPRR) has biased composition (basic and acidic residues).

Belongs to the PDGF/VEGF growth factor family. Antiparallel homodimer; disulfide-linked. Also found as heterodimer with VEGFA/VEGF. Isoform PlGF-3 is found both as homodimer and as monomer. N-glycosylated. As to expression, while the three isoforms are present in most placental tissues, PlGF-2 is specific to early (8 week) placenta and only PlGF-1 is found in the colon and mammary carcinomas.

It is found in the secreted. In terms of biological role, growth factor active in angiogenesis and endothelial cell growth, stimulating their proliferation and migration. It binds to the receptor FLT1/VEGFR-1. Isoform PlGF-2 binds NRP1/neuropilin-1 and NRP2/neuropilin-2 in a heparin-dependent manner. Also promotes cell tumor growth. This Homo sapiens (Human) protein is Placenta growth factor (PGF).